Here is a 154-residue protein sequence, read N- to C-terminus: Superoxide dismutase [Cu-Zn] (154 aa).

3 residues coordinate Cu cation: histidine 47, histidine 49, and histidine 64. A disulfide bridge links cysteine 58 with cysteine 147. Residues histidine 64, histidine 72, histidine 81, and aspartate 84 each coordinate Zn(2+). Histidine 121 is a Cu cation binding site. Basic and acidic residues predominate over residues aspartate 125–leucine 136. Positions aspartate 125–arginine 144 are disordered. Arginine 144 provides a ligand contact to substrate.

It belongs to the Cu-Zn superoxide dismutase family. In terms of assembly, homodimer. Cu cation is required as a cofactor. It depends on Zn(2+) as a cofactor.

The protein resides in the cytoplasm. It carries out the reaction 2 superoxide + 2 H(+) = H2O2 + O2. In terms of biological role, destroys radicals which are normally produced within the cells and which are toxic to biological systems. This is Superoxide dismutase [Cu-Zn] (sod-1) from Neurospora crassa (strain ATCC 24698 / 74-OR23-1A / CBS 708.71 / DSM 1257 / FGSC 987).